We begin with the raw amino-acid sequence, 333 residues long: Nucleoid-associated protein PSPPH_1145 (333 aa).

This sequence belongs to the YejK family.

It localises to the cytoplasm. The protein resides in the nucleoid. The sequence is that of Nucleoid-associated protein PSPPH_1145 from Pseudomonas savastanoi pv. phaseolicola (strain 1448A / Race 6) (Pseudomonas syringae pv. phaseolicola (strain 1448A / Race 6)).